Reading from the N-terminus, the 296-residue chain is Ribosomal RNA small subunit methyltransferase A (296 aa).

S-adenosyl-L-methionine contacts are provided by asparagine 31, leucine 33, glycine 58, glutamate 79, aspartate 111, and asparagine 136.

Belongs to the class I-like SAM-binding methyltransferase superfamily. rRNA adenine N(6)-methyltransferase family. RsmA subfamily.

The protein resides in the cytoplasm. It carries out the reaction adenosine(1518)/adenosine(1519) in 16S rRNA + 4 S-adenosyl-L-methionine = N(6)-dimethyladenosine(1518)/N(6)-dimethyladenosine(1519) in 16S rRNA + 4 S-adenosyl-L-homocysteine + 4 H(+). Specifically dimethylates two adjacent adenosines (A1518 and A1519) in the loop of a conserved hairpin near the 3'-end of 16S rRNA in the 30S particle. May play a critical role in biogenesis of 30S subunits. This chain is Ribosomal RNA small subunit methyltransferase A, found in Lactobacillus johnsonii (strain CNCM I-12250 / La1 / NCC 533).